We begin with the raw amino-acid sequence, 396 residues long: S-adenosylmethionine synthase (396 aa).

His-16 contacts ATP. Residue Asp-18 participates in Mg(2+) binding. A K(+)-binding site is contributed by Glu-44. Residues Glu-57 and Gln-100 each contribute to the L-methionine site. Positions 100 to 110 are flexible loop; the sequence is QSVDINQGVDR. Residues 165-167, 231-232, Asp-240, 246-247, Ala-263, and Lys-267 each bind ATP; these read DAK, KF, and RK. Asp-240 is a binding site for L-methionine. An L-methionine-binding site is contributed by Lys-271.

This sequence belongs to the AdoMet synthase family. As to quaternary structure, homotetramer; dimer of dimers. It depends on Mg(2+) as a cofactor. The cofactor is K(+).

The protein localises to the cytoplasm. It catalyses the reaction L-methionine + ATP + H2O = S-adenosyl-L-methionine + phosphate + diphosphate. Its pathway is amino-acid biosynthesis; S-adenosyl-L-methionine biosynthesis; S-adenosyl-L-methionine from L-methionine: step 1/1. In terms of biological role, catalyzes the formation of S-adenosylmethionine (AdoMet) from methionine and ATP. The overall synthetic reaction is composed of two sequential steps, AdoMet formation and the subsequent tripolyphosphate hydrolysis which occurs prior to release of AdoMet from the enzyme. In Azotobacter vinelandii (strain DJ / ATCC BAA-1303), this protein is S-adenosylmethionine synthase.